A 562-amino-acid polypeptide reads, in one-letter code: tRNA (guanine(37)-N(1))-methyltransferase (562 aa).

Residues 1–41 constitute a mitochondrion transit peptide; the sequence is MLFRRFLNLTTKTPHLQTFRARHYFRNMSCPELIPPPTVRG. Residues H243, 281–282, and N340 contribute to the S-adenosyl-L-methionine site; that span reads DL. The segment covering 523 to 534 has biased composition (basic and acidic residues); that stretch reads AHIVAKKPEKKP. Positions 523 to 562 are disordered; that stretch reads AHIVAKKPEKKPLPAKPASKKNKNQANTKQVEAGLDKMQM.

Belongs to the class I-like SAM-binding methyltransferase superfamily. TRM5/TYW2 family. As to quaternary structure, monomer.

The protein localises to the mitochondrion matrix. Its subcellular location is the nucleus. It is found in the cytoplasm. The enzyme catalyses guanosine(37) in tRNA + S-adenosyl-L-methionine = N(1)-methylguanosine(37) in tRNA + S-adenosyl-L-homocysteine + H(+). In terms of biological role, specifically methylates the N1 position of guanosine-37 in various cytoplasmic and mitochondrial tRNAs. Methylation is not dependent on the nature of the nucleoside 5' of the target nucleoside. This is the first step in the biosynthesis of wybutosine (yW), a modified base adjacent to the anticodon of tRNAs and required for accurate decoding. The sequence is that of tRNA (guanine(37)-N(1))-methyltransferase from Aedes aegypti (Yellowfever mosquito).